Here is a 349-residue protein sequence, read N- to C-terminus: NADH-quinone oxidoreductase subunit H (349 aa).

Helical transmembrane passes span 16 to 36 (WPVV…MGCV), 88 to 108 (GLFI…WAVV), 123 to 143 (LLFL…AGWA), 157 to 177 (AAQM…VLLI), 202 to 222 (FLSW…ISGI), 264 to 284 (ILVS…PVGF), 285 to 305 (LPDG…IFLW), and 325 to 345 (VFIP…MSPL).

Belongs to the complex I subunit 1 family. In terms of assembly, NDH-1 is composed of 14 different subunits. Subunits NuoA, H, J, K, L, M, N constitute the membrane sector of the complex.

Its subcellular location is the cell inner membrane. The enzyme catalyses a quinone + NADH + 5 H(+)(in) = a quinol + NAD(+) + 4 H(+)(out). In terms of biological role, NDH-1 shuttles electrons from NADH, via FMN and iron-sulfur (Fe-S) centers, to quinones in the respiratory chain. The immediate electron acceptor for the enzyme in this species is believed to be ubiquinone. Couples the redox reaction to proton translocation (for every two electrons transferred, four hydrogen ions are translocated across the cytoplasmic membrane), and thus conserves the redox energy in a proton gradient. This subunit may bind ubiquinone. This chain is NADH-quinone oxidoreductase subunit H, found in Azoarcus sp. (strain BH72).